Consider the following 668-residue polypeptide: UvrABC system protein B (668 aa).

Residues 31-188 (HGIEAGEKAQ…RKLVNIQFER (158 aa)) enclose the Helicase ATP-binding domain. An ATP-binding site is contributed by 44–51 (GATGTGKT). Residues 97 to 120 (YYDYYQPEAYVPSSDTYIEKDSSI) carry the Beta-hairpin motif. Positions 435–601 (QMDDLVGEIN…TIIKPIRDLI (167 aa)) constitute a Helicase C-terminal domain. The UVR domain maps to 630-665 (EKLIARLEDEMRAAAKKLDFEQAASLRDTIMDMKTE).

This sequence belongs to the UvrB family. Forms a heterotetramer with UvrA during the search for lesions. Interacts with UvrC in an incision complex.

The protein resides in the cytoplasm. In terms of biological role, the UvrABC repair system catalyzes the recognition and processing of DNA lesions. A damage recognition complex composed of 2 UvrA and 2 UvrB subunits scans DNA for abnormalities. Upon binding of the UvrA(2)B(2) complex to a putative damaged site, the DNA wraps around one UvrB monomer. DNA wrap is dependent on ATP binding by UvrB and probably causes local melting of the DNA helix, facilitating insertion of UvrB beta-hairpin between the DNA strands. Then UvrB probes one DNA strand for the presence of a lesion. If a lesion is found the UvrA subunits dissociate and the UvrB-DNA preincision complex is formed. This complex is subsequently bound by UvrC and the second UvrB is released. If no lesion is found, the DNA wraps around the other UvrB subunit that will check the other stand for damage. The protein is UvrABC system protein B of Levilactobacillus brevis (strain ATCC 367 / BCRC 12310 / CIP 105137 / JCM 1170 / LMG 11437 / NCIMB 947 / NCTC 947) (Lactobacillus brevis).